A 144-amino-acid polypeptide reads, in one-letter code: Putative golgin subfamily A member 2B (144 aa).

Disordered regions lie at residues 1 to 20 (MDSE…PEDL) and 95 to 132 (SCGR…EAAG). Residues 110–131 (AEGGGVHQQAGPGQGRGEGEAA) are compositionally biased toward gly residues.

This sequence belongs to the GOLGA2 family.

The sequence is that of Putative golgin subfamily A member 2B (GOLGA2P5) from Homo sapiens (Human).